Reading from the N-terminus, the 387-residue chain is uncharacterized protein (387 aa).

The signal sequence occupies residues 1-27 (MKKWMITIAMLILAGIALFVFISPLKS).

This is an uncharacterized protein from Bacillus subtilis (strain 168).